Consider the following 339-residue polypeptide: DNA-directed RNA polymerase subunit alpha (339 aa).

The segment at 1–235 (MVIQKNWQEL…DQLQIFVNFE (235 aa)) is alpha N-terminal domain (alpha-NTD). The tract at residues 251–339 (FNPALLKKVD…DLAKRFEEHY (89 aa)) is alpha C-terminal domain (alpha-CTD).

This sequence belongs to the RNA polymerase alpha chain family. Homodimer. The RNAP catalytic core consists of 2 alpha, 1 beta, 1 beta' and 1 omega subunit. When a sigma factor is associated with the core the holoenzyme is formed, which can initiate transcription.

It catalyses the reaction RNA(n) + a ribonucleoside 5'-triphosphate = RNA(n+1) + diphosphate. Functionally, DNA-dependent RNA polymerase catalyzes the transcription of DNA into RNA using the four ribonucleoside triphosphates as substrates. The sequence is that of DNA-directed RNA polymerase subunit alpha from Methylobacterium sp. (strain 4-46).